Consider the following 174-residue polypeptide: Frataxin homolog, mitochondrial (174 aa).

The transit peptide at 1–21 directs the protein to the mitochondrion; the sequence is MIKRSLASLVRVSSVMGRRYM.

Belongs to the frataxin family. As to quaternary structure, monomer. Forms a 24-mer complex made up of 8 copies of a trimeric subcomplex. Increments in mitochondrial iron uptake induce stepwise assembly of species ranging from trimers to 24-mers. Interacts with ISU1 with a 1 to 1 stoichiometry; the interaction is direct. Interacts with YHB1, SDH1, SDH2, AIM45 and CIR1. Post-translationally, processed in two steps by mitochondrial processing peptidase (MPP). MPP first cleaves the precursor to intermediate form and subsequently converts the intermediate to mature size protein.

The protein localises to the mitochondrion matrix. The catalysed reaction is 4 Fe(2+) + O2 + 4 H(+) = 4 Fe(3+) + 2 H2O. Functionally, promotes the biosynthesis of heme as well as the assembly and repair of iron-sulfur clusters by delivering Fe(2+) to proteins involved in these pathways. Plays a role in the protection against iron-catalyzed oxidative stress through its ability to catalyze the oxidation of Fe(2+) to Fe(3+). Can store large amounts of the metal in the form of a ferrihydrite mineral by oligomerization. May be involved in regulation of the mitochondrial electron transport chain. In Saccharomyces cerevisiae (strain ATCC 204508 / S288c) (Baker's yeast), this protein is Frataxin homolog, mitochondrial.